Here is a 68-residue protein sequence, read N- to C-terminus: Large ribosomal subunit protein uL29 (68 aa).

It belongs to the universal ribosomal protein uL29 family.

This Leuconostoc citreum (strain KM20) protein is Large ribosomal subunit protein uL29.